We begin with the raw amino-acid sequence, 411 residues long: Na(+)-translocating NADH-quinone reductase subunit F (411 aa).

Residues 5 to 25 (VILALGIAAFTVIVLVLVAII) form a helical membrane-spanning segment. The 95-residue stretch at 36–130 (GDITIDINDD…NMEVELPEEI (95 aa)) folds into the 2Fe-2S ferredoxin-type domain. Residues cysteine 73, cysteine 79, cysteine 82, and cysteine 114 each contribute to the [2Fe-2S] cluster site. The FAD-binding FR-type domain maps to 133-273 (VKKWECTVIS…SGPFGEFFAK (141 aa)).

This sequence belongs to the NqrF family. Composed of six subunits; NqrA, NqrB, NqrC, NqrD, NqrE and NqrF. [2Fe-2S] cluster is required as a cofactor. Requires FAD as cofactor.

The protein resides in the cell inner membrane. It carries out the reaction a ubiquinone + n Na(+)(in) + NADH + H(+) = a ubiquinol + n Na(+)(out) + NAD(+). Functionally, NQR complex catalyzes the reduction of ubiquinone-1 to ubiquinol by two successive reactions, coupled with the transport of Na(+) ions from the cytoplasm to the periplasm. The first step is catalyzed by NqrF, which accepts electrons from NADH and reduces ubiquinone-1 to ubisemiquinone by a one-electron transfer pathway. This Haemophilus influenzae (strain 86-028NP) protein is Na(+)-translocating NADH-quinone reductase subunit F.